A 204-amino-acid chain; its full sequence is Holliday junction branch migration complex subunit RuvA (204 aa).

A domain I region spans residues 1-64 (MIGRVTGILV…EDAHLLFGFS (64 aa)). Residues 65–143 (HKQDRSLFRE…GLQQTDFFIK (79 aa)) are domain II. A flexible linker region spans residues 144-155 (SSHLPGIKCSKL). The tract at residues 156–204 (DQSLQLDEAVSALIALGYKPIEAEKMVKKVLKADLTSEQLIREALKAAL) is domain III.

Belongs to the RuvA family. As to quaternary structure, homotetramer. Forms an RuvA(8)-RuvB(12)-Holliday junction (HJ) complex. HJ DNA is sandwiched between 2 RuvA tetramers; dsDNA enters through RuvA and exits via RuvB. An RuvB hexamer assembles on each DNA strand where it exits the tetramer. Each RuvB hexamer is contacted by two RuvA subunits (via domain III) on 2 adjacent RuvB subunits; this complex drives branch migration. In the full resolvosome a probable DNA-RuvA(4)-RuvB(12)-RuvC(2) complex forms which resolves the HJ.

It localises to the cytoplasm. Its function is as follows. The RuvA-RuvB-RuvC complex processes Holliday junction (HJ) DNA during genetic recombination and DNA repair, while the RuvA-RuvB complex plays an important role in the rescue of blocked DNA replication forks via replication fork reversal (RFR). RuvA specifically binds to HJ cruciform DNA, conferring on it an open structure. The RuvB hexamer acts as an ATP-dependent pump, pulling dsDNA into and through the RuvAB complex. HJ branch migration allows RuvC to scan DNA until it finds its consensus sequence, where it cleaves and resolves the cruciform DNA. This chain is Holliday junction branch migration complex subunit RuvA, found in Histophilus somni (strain 2336) (Haemophilus somnus).